A 369-amino-acid polypeptide reads, in one-letter code: Glutamine synthetase 2 cytoplasmic (369 aa).

One can recognise a GS beta-grasp domain in the interval 32 to 112 (VQATYVWIDG…VMCDTYKFDG (81 aa)). The GS catalytic domain occupies 119-369 (KRKTCLEVAN…AILRTICLDE (251 aa)).

Belongs to the glutamine synthetase family. In terms of assembly, homooctamer.

The protein localises to the cytoplasm. It carries out the reaction L-glutamate + NH4(+) + ATP = L-glutamine + ADP + phosphate + H(+). The chain is Glutamine synthetase 2 cytoplasmic (Gs2) from Drosophila melanogaster (Fruit fly).